Here is a 120-residue protein sequence, read N- to C-terminus: Large ribosomal subunit protein uL18 (120 aa).

This sequence belongs to the universal ribosomal protein uL18 family. As to quaternary structure, part of the 50S ribosomal subunit; part of the 5S rRNA/L5/L18/L25 subcomplex. Contacts the 5S and 23S rRNAs.

Its function is as follows. This is one of the proteins that bind and probably mediate the attachment of the 5S RNA into the large ribosomal subunit, where it forms part of the central protuberance. The sequence is that of Large ribosomal subunit protein uL18 from Brucella suis biovar 1 (strain 1330).